Here is a 404-residue protein sequence, read N- to C-terminus: Chorismate synthase (404 aa).

NADP(+) contacts are provided by Arg-40 and Arg-46. FMN is bound by residues 133–135 (RSS), 266–267 (QA), Gly-313, 328–332 (KPIPT), and Arg-354. The tract at residues 283–320 (PGSQVHDPIEPREDGAQAYPRRTNHAGGTEGGTTTGMP) is disordered. Positions 337-357 (LDSVDTATGEPEPTRYERSDI) are disordered.

Belongs to the chorismate synthase family. In terms of assembly, homotetramer. FMNH2 is required as a cofactor.

It carries out the reaction 5-O-(1-carboxyvinyl)-3-phosphoshikimate = chorismate + phosphate. The protein operates within metabolic intermediate biosynthesis; chorismate biosynthesis; chorismate from D-erythrose 4-phosphate and phosphoenolpyruvate: step 7/7. Catalyzes the anti-1,4-elimination of the C-3 phosphate and the C-6 proR hydrogen from 5-enolpyruvylshikimate-3-phosphate (EPSP) to yield chorismate, which is the branch point compound that serves as the starting substrate for the three terminal pathways of aromatic amino acid biosynthesis. This reaction introduces a second double bond into the aromatic ring system. The chain is Chorismate synthase from Salinibacter ruber (strain DSM 13855 / M31).